An 89-amino-acid polypeptide reads, in one-letter code: MAITQERKTQLINEFKTHESDTGSPEVQIAILTDQINNLNEHLRTHKKDHHSRRGLLKMVGKRRNLLTYLRNKDVTRYRELINKLGLRR.

This sequence belongs to the universal ribosomal protein uS15 family. Part of the 30S ribosomal subunit. Forms a bridge to the 50S subunit in the 70S ribosome, contacting the 23S rRNA.

Functionally, one of the primary rRNA binding proteins, it binds directly to 16S rRNA where it helps nucleate assembly of the platform of the 30S subunit by binding and bridging several RNA helices of the 16S rRNA. In terms of biological role, forms an intersubunit bridge (bridge B4) with the 23S rRNA of the 50S subunit in the ribosome. This Bacillus licheniformis (strain ATCC 14580 / DSM 13 / JCM 2505 / CCUG 7422 / NBRC 12200 / NCIMB 9375 / NCTC 10341 / NRRL NRS-1264 / Gibson 46) protein is Small ribosomal subunit protein uS15.